A 103-amino-acid chain; its full sequence is Large ribosomal subunit protein eL14 (103 aa).

Belongs to the eukaryotic ribosomal protein eL14 family.

This Pyrobaculum arsenaticum (strain DSM 13514 / JCM 11321 / PZ6) protein is Large ribosomal subunit protein eL14.